Reading from the N-terminus, the 246-residue chain is MAGHSKWANTRHRKAAQDAKRGKIFTKIIRELVTAAKLGGGDPDANPRLRAAVDKALANNMTRDTLNRAIARGVGGDEDSNMETIIYEGYGPGGTAIMIECLSDNRNRTVAEVRHAFSKCGGNLGTDGSVAYLFSKKGVISFEKGDEDTIMEAALEAGAEDVVTYDDGAIDVYTAWEEMGKVRDALEAAGLKADSAEVSMIPSTKADMDAETAPKLLRLIDMLEDCDDVQEVYHNGEISDEVAATL.

Positions 1–20 (MAGHSKWANTRHRKAAQDAK) are disordered.

The protein belongs to the TACO1 family.

The protein resides in the cytoplasm. This is Probable transcriptional regulatory protein YebC from Salmonella typhimurium (strain LT2 / SGSC1412 / ATCC 700720).